Here is a 670-residue protein sequence, read N- to C-terminus: DNA ligase (670 aa).

Residues 35–39 (DSVYD), 84–85 (SL), and glutamate 116 each bind NAD(+). The active-site N6-AMP-lysine intermediate is lysine 118. Residues arginine 139, glutamate 176, lysine 293, and lysine 317 each coordinate NAD(+). Zn(2+) is bound by residues cysteine 411, cysteine 414, cysteine 429, and cysteine 435. Positions 592–670 (VVKSEIAGKT…EEAFLKLLKS (79 aa)) constitute a BRCT domain.

It belongs to the NAD-dependent DNA ligase family. LigA subfamily. Mg(2+) serves as cofactor. The cofactor is Mn(2+).

The enzyme catalyses NAD(+) + (deoxyribonucleotide)n-3'-hydroxyl + 5'-phospho-(deoxyribonucleotide)m = (deoxyribonucleotide)n+m + AMP + beta-nicotinamide D-nucleotide.. Its function is as follows. DNA ligase that catalyzes the formation of phosphodiester linkages between 5'-phosphoryl and 3'-hydroxyl groups in double-stranded DNA using NAD as a coenzyme and as the energy source for the reaction. It is essential for DNA replication and repair of damaged DNA. The sequence is that of DNA ligase from Coxiella burnetii (strain RSA 331 / Henzerling II).